The chain runs to 303 residues: D-alanyl-D-alanine carboxypeptidase (303 aa).

Residues 7–23 (LLLLLFLIYLGYDYVNE) form a helical membrane-spanning segment. The tract at residues 37-56 (DQNPKEHLENSGTSENTQEK) is disordered. Substrate-binding positions include 154–156 (YAL) and S161. H163 and D170 together coordinate Zn(2+). E213 (proton donor/acceptor) is an active-site residue. H216 is a Zn(2+) binding site.

Belongs to the peptidase M15B family. Requires Zn(2+) as cofactor.

Its subcellular location is the cell membrane. The DD-carboxypeptidase activity is not inhibited by beta-lactam antibiotics. In terms of biological role, cleaves the C-terminal D-alanine residue of UDP-muramyl-pentapeptide (UDP-MurNAc-L-Ala-D-Glu-mDAP-D-Ala-D-Ala) or diacetyl-L-Lys-D-Ala-D-Ala. However the physiological substrate likely contains L-Lys instead of mDAP at the third position of the pentapeptide. Also releases the C-terminal D-lactate from UDP-MurNAc-L-Ala-D-Glu-mDAP-D-Ala-D-lactate, a depsipeptide produced by the vancomycin resistance protein VanA. Therefore, VanY should contribute in vivo to the hydrolysis of both the D-alanyl-D-alanine- and the depsipeptide-containing peptidoglycan precursors. Is not necessary for vancomycin resistance of E.faecium BM4147 and perhaps not W14-9. Does not display transpeptidase or beta-lactamase activities. The sequence is that of D-alanyl-D-alanine carboxypeptidase from Enterococcus faecium (Streptococcus faecium).